A 151-amino-acid polypeptide reads, in one-letter code: Succinate dehydrogenase subunit 4, mitochondrial (151 aa).

The N-terminal 78 residues, 1-78, are a transit peptide targeting the mitochondrion; it reads MSLRRTILDL…RSISSSIGQS (78 aa). Residue His-109 coordinates heme. Tyr-121 provides a ligand contact to a ubiquinone. Residues 130–150 form a helical membrane-spanning segment; that stretch reads LIVMSLGLFQIIVLKDIILFL.

In terms of assembly, component of complex II composed of eight subunits in plants: four classical SDH subunits SDH1, SDH2, SDH3 and SDH4 (a flavoprotein (FP), an iron-sulfur protein (IP), and a cytochrome b composed of a large and a small subunit.), as well as four subunits unknown in mitochondria from bacteria and heterotrophic eukaryotes. It depends on heme as a cofactor. In terms of tissue distribution, expressed in flowers, inflorescences and stems.

It is found in the mitochondrion inner membrane. It participates in carbohydrate metabolism; tricarboxylic acid cycle. Functionally, membrane-anchoring subunit of succinate dehydrogenase (SDH). The polypeptide is Succinate dehydrogenase subunit 4, mitochondrial (Arabidopsis thaliana (Mouse-ear cress)).